A 413-amino-acid polypeptide reads, in one-letter code: Histidine--tRNA ligase (413 aa).

Belongs to the class-II aminoacyl-tRNA synthetase family. Homodimer.

The protein localises to the cytoplasm. It catalyses the reaction tRNA(His) + L-histidine + ATP = L-histidyl-tRNA(His) + AMP + diphosphate + H(+). The protein is Histidine--tRNA ligase of Fusobacterium nucleatum subsp. nucleatum (strain ATCC 25586 / DSM 15643 / BCRC 10681 / CIP 101130 / JCM 8532 / KCTC 2640 / LMG 13131 / VPI 4355).